Here is a 171-residue protein sequence, read N- to C-terminus: NADH-quinone oxidoreductase subunit I (171 aa).

4Fe-4S ferredoxin-type domains are found at residues 41-71 (LTRD…LQKT) and 81-110 (EFFR…LTPD). Residues cysteine 51, cysteine 54, cysteine 57, cysteine 61, cysteine 90, cysteine 93, cysteine 96, and cysteine 100 each coordinate [4Fe-4S] cluster.

The protein belongs to the complex I 23 kDa subunit family. As to quaternary structure, NDH-1 is composed of 14 different subunits. Subunits NuoA, H, J, K, L, M, N constitute the membrane sector of the complex. The cofactor is [4Fe-4S] cluster.

The protein localises to the cell inner membrane. The enzyme catalyses a quinone + NADH + 5 H(+)(in) = a quinol + NAD(+) + 4 H(+)(out). Its function is as follows. NDH-1 shuttles electrons from NADH, via FMN and iron-sulfur (Fe-S) centers, to quinones in the respiratory chain. The immediate electron acceptor for the enzyme in this species is believed to be ubiquinone. Couples the redox reaction to proton translocation (for every two electrons transferred, four hydrogen ions are translocated across the cytoplasmic membrane), and thus conserves the redox energy in a proton gradient. The chain is NADH-quinone oxidoreductase subunit I from Methylococcus capsulatus (strain ATCC 33009 / NCIMB 11132 / Bath).